A 222-amino-acid polypeptide reads, in one-letter code: Small ribosomal subunit protein uS3 (222 aa).

In terms of domain architecture, KH type-2 spans 39 to 107; the sequence is VREFLHKKLA…PVQINIEEVR (69 aa).

It belongs to the universal ribosomal protein uS3 family. Part of the 30S ribosomal subunit. Forms a tight complex with proteins S10 and S14.

Binds the lower part of the 30S subunit head. Binds mRNA in the 70S ribosome, positioning it for translation. The protein is Small ribosomal subunit protein uS3 of Francisella tularensis subsp. tularensis (strain FSC 198).